A 467-amino-acid chain; its full sequence is MREGSALPGAPGAAPVPGFLAKLWALVEDPQSDDVICWSRNGENFCILDEQRFAKELLPKYFKHNNISSFIRQLNMYGFRKVVALENGMITAEKNSVIEFQHPFFKQGNAHLLENIKRKVSAVRTEDLKVCAEDLHKVLSEVQEMREQQNNMDIRLANMKRENKALWKEVAVLRQKHSQQQKLLSKILQFILSLMRGNYIVGVKRKRSLTDAAGASPSKYSRQYVRIPVESGQAMAFSEHNSDDEDGNRTGLIIRDITDTLENATNGLLAVAHTSGRDRETQTALDPGLPICQVSQPNELSCAEPIPPVHINDVSKPNEMGNVAVELHTAQANAPEDPVSVIDSILNENNSGNQNDPLLDREEIQDFLNCIDASLEELQAMLSGKQYSFGSEAFSDVFNPELPALDMNLMETSPGMENIANMEDSTEDLGASERETAGSKGGQEGTESCDSSVLFQNCVLKWNFSSL.

The DNA-binding element occupies 16-121 (VPGFLAKLWA…LLENIKRKVS (106 aa)). Positions 128–201 (LKVCAEDLHK…LSLMRGNYIV (74 aa)) are hydrophobic repeat HR-A/B. The tract at residues 364 to 389 (IQDFLNCIDASLEELQAMLSGKQYSF) is hydrophobic repeat HR-C. The interval 427 to 449 (EDLGASERETAGSKGGQEGTESC) is disordered.

The protein belongs to the HSF family. Homotrimer. In terms of tissue distribution, expressed in most tissues. High levels are found in erythrocytes and low levels in liver.

Its subcellular location is the cytoplasm. The protein localises to the nucleus. Its function is as follows. DNA-binding protein that specifically binds heat shock promoter elements (HSE) and activates transcription. HSF3 binds DNA constitutively only when the C-terminal region is deleted. The sequence is that of Heat shock factor protein 3 (HSF3) from Gallus gallus (Chicken).